The following is a 288-amino-acid chain: GTP-binding protein 8 (288 aa).

The region spanning 109–282 (HRPEVCFIGR…RCFIADITGN (174 aa)) is the EngB-type G domain. Residues 117 to 124 (GRSNVGKS), 146 to 150 (GHTKK), 164 to 167 (DMPG), 226 to 229 (TKID), and 261 to 263 (VSA) contribute to the GTP site. Mg(2+) is bound by residues serine 124 and threonine 148.

This sequence belongs to the TRAFAC class TrmE-Era-EngA-EngB-Septin-like GTPase superfamily. EngB GTPase family. Requires Mg(2+) as cofactor.

This chain is GTP-binding protein 8 (GTPBP8), found in Bos taurus (Bovine).